The primary structure comprises 307 residues: Glutathione synthetase (307 aa).

The region spanning 120-304 (KLGALRFSRW…LADQTIERLR (185 aa)) is the ATP-grasp domain. An ATP-binding site is contributed by 146-202 (AREQGDVVLKPLGGRAGLGVIRVQAEAPGLKALLELVTEQERLPVMAQRFLPDVTEG). Mg(2+)-binding residues include Glu275 and Asn277.

The protein belongs to the prokaryotic GSH synthase family. It depends on Mg(2+) as a cofactor. The cofactor is Mn(2+).

The catalysed reaction is gamma-L-glutamyl-L-cysteine + glycine + ATP = glutathione + ADP + phosphate + H(+). The protein operates within sulfur metabolism; glutathione biosynthesis; glutathione from L-cysteine and L-glutamate: step 2/2. This is Glutathione synthetase from Parasynechococcus marenigrum (strain WH8102).